The sequence spans 455 residues: Dihydrolipoyllysine-residue succinyltransferase component of 2-oxoglutarate dehydrogenase complex, mitochondrial (455 aa).

The N-terminal 68 residues, 1–68 (MLSRSRCASR…RFFRTTAVCK (68 aa)), are a transit peptide targeting the mitochondrion. The region spanning 71-145 (VITVKTPAFA…EGGTPLFTLR (75 aa)) is the Lipoyl-binding domain. At Ser82 the chain carries Phosphoserine. Lys111 is subject to N6-lipoyllysine. N6-acetyllysine is present on Lys155. Residues 155 to 173 (KPAAAPAAAAPKAEPTVSA) show a composition bias toward low complexity. The tract at residues 155-220 (KPAAAPAAAA…PRAEAGAGVG (66 aa)) is disordered. A compositionally biased stretch (pro residues) spans 174-193 (VPPPPAAPIPTQMPPVPSPS). Residues Lys269, Lys274, Lys275, Lys279, and Lys309 each carry the N6-acetyllysine modification. Active-site residues include His426 and Asp430.

The protein belongs to the 2-oxoacid dehydrogenase family. As to quaternary structure, the 2-oxoglutarate dehydrogenase complex is composed of OGDH (2-oxoglutarate dehydrogenase; E1), DLST (dihydrolipoamide succinyltransferase; E2), DLD (dihydrolipoamide dehydrogenase; E3) and the assembly factor KGD4. It contains multiple copies of the three enzymatic components (E1, E2 and E3). In the nucleus, the 2-oxoglutarate dehydrogenase complex associates with KAT2A. Interacts with ABHD11; this interaction maintains the functional lipoylation of the 2-oxoglutarate dehydrogenase complex. The cofactor is (R)-lipoate.

The protein resides in the mitochondrion matrix. It is found in the nucleus. It catalyses the reaction N(6)-[(R)-dihydrolipoyl]-L-lysyl-[protein] + succinyl-CoA = N(6)-[(R)-S(8)-succinyldihydrolipoyl]-L-lysyl-[protein] + CoA. It participates in amino-acid degradation; L-lysine degradation via saccharopine pathway; glutaryl-CoA from L-lysine: step 6/6. Its pathway is carbohydrate metabolism; tricarboxylic acid cycle. Dihydrolipoamide succinyltransferase (E2) component of the 2-oxoglutarate dehydrogenase complex. The 2-oxoglutarate dehydrogenase complex catalyzes the overall conversion of 2-oxoglutarate to succinyl-CoA and CO(2). The 2-oxoglutarate dehydrogenase complex is mainly active in the mitochondrion. A fraction of the 2-oxoglutarate dehydrogenase complex also localizes in the nucleus and is required for lysine succinylation of histones: associates with KAT2A on chromatin and provides succinyl-CoA to histone succinyltransferase KAT2A. The sequence is that of Dihydrolipoyllysine-residue succinyltransferase component of 2-oxoglutarate dehydrogenase complex, mitochondrial from Bos taurus (Bovine).